A 595-amino-acid polypeptide reads, in one-letter code: Probable serine/threonine-protein kinase KIN1 homolog (595 aa).

Residues 67 to 316 form the Protein kinase domain; sequence YKLIKTLGKG…LENVKKSKWT (250 aa). ATP-binding positions include 73–81 and K96; that span reads LGKGSCAKV. The active-site Proton acceptor is the D188.

The protein belongs to the protein kinase superfamily. CAMK Ser/Thr protein kinase family. NIM1 subfamily.

It is found in the cytoplasm. The protein localises to the cell membrane. It carries out the reaction L-seryl-[protein] + ATP = O-phospho-L-seryl-[protein] + ADP + H(+). The catalysed reaction is L-threonyl-[protein] + ATP = O-phospho-L-threonyl-[protein] + ADP + H(+). Serine/threonine protein kinase involved in regulation of exocytosis. The chain is Probable serine/threonine-protein kinase KIN1 homolog (KIN1) from Enterocytozoon bieneusi (strain H348) (Microsporidian parasite).